The sequence spans 762 residues: Mediator of RNA polymerase II transcription subunit 15 (762 aa).

3 disordered regions span residues alanine 70–leucine 102, glycine 311–proline 330, and glycine 406–glutamine 494. Residues aspartate 76–glycine 94 are compositionally biased toward gly residues. Residues glutamine 465 to glycine 481 show a composition bias toward polar residues.

This sequence belongs to the Mediator complex subunit 15 family. As to quaternary structure, component of the Mediator complex.

It is found in the nucleus. Component of the Mediator complex, a coactivator involved in the regulated transcription of nearly all RNA polymerase II-dependent genes. Mediator functions as a bridge to convey information from gene-specific regulatory proteins to the basal RNA polymerase II transcription machinery. Mediator is recruited to promoters by direct interactions with regulatory proteins and serves as a scaffold for the assembly of a functional preinitiation complex with RNA polymerase II and the general transcription factors. The chain is Mediator of RNA polymerase II transcription subunit 15 (MED15) from Anopheles gambiae (African malaria mosquito).